We begin with the raw amino-acid sequence, 186 residues long: Ribosome-recycling factor (186 aa).

Belongs to the RRF family.

It is found in the cytoplasm. Responsible for the release of ribosomes from messenger RNA at the termination of protein biosynthesis. May increase the efficiency of translation by recycling ribosomes from one round of translation to another. The polypeptide is Ribosome-recycling factor (Bartonella henselae (strain ATCC 49882 / DSM 28221 / CCUG 30454 / Houston 1) (Rochalimaea henselae)).